The primary structure comprises 206 residues: Large ribosomal subunit protein uL3 (206 aa).

The interval 127–151 (SGGPSSHGSKFHRHLGGTGQATTPA) is disordered.

Belongs to the universal ribosomal protein uL3 family. In terms of assembly, part of the 50S ribosomal subunit. Forms a cluster with proteins L14 and L19.

One of the primary rRNA binding proteins, it binds directly near the 3'-end of the 23S rRNA, where it nucleates assembly of the 50S subunit. The sequence is that of Large ribosomal subunit protein uL3 from Borreliella burgdorferi (strain ZS7) (Borrelia burgdorferi).